The chain runs to 327 residues: Ankyrin repeat domain-containing protein SOWAHD (327 aa).

The tract at residues 1 to 31 is disordered; that stretch reads MAQALEDGNPLPKASNRPAESEAPSDPQIKD. ANK repeat units lie at residues 112 to 141, 147 to 162, and 186 to 216; these read CLEP…AEPS, DPIT…AKHG, and PGSG…LGAD. The disordered stretch occupies residues 251-311; sequence ERDRKRENAN…EKKASSTQEG (61 aa). Residues 260–275 are compositionally biased toward low complexity; sequence NNNSSRTTTTTTTTSR. The segment covering 292 to 305 has biased composition (basic and acidic residues); sequence HYKEASQPVKEKKA.

It belongs to the SOWAH family.

This is Ankyrin repeat domain-containing protein SOWAHD (Sowahd) from Mus musculus (Mouse).